A 465-amino-acid polypeptide reads, in one-letter code: Argininosuccinate lyase (465 aa).

It belongs to the lyase 1 family. Argininosuccinate lyase subfamily.

Its subcellular location is the cytoplasm. The catalysed reaction is 2-(N(omega)-L-arginino)succinate = fumarate + L-arginine. The protein operates within amino-acid biosynthesis; L-arginine biosynthesis; L-arginine from L-ornithine and carbamoyl phosphate: step 3/3. In Desulfatibacillum aliphaticivorans, this protein is Argininosuccinate lyase.